The sequence spans 524 residues: Keratin, type II cytoskeletal 71 (524 aa).

The segment at 1–130 (MNRQFTCKSG…DPEIQKVRAQ (130 aa)) is head. The interval 131–166 (EREQIKALNNKFASFIDKVRFLEQQNQVLETKWELL) is coil 1A. In terms of domain architecture, IF rod spans 131–444 (EREQIKALNN…KLLESEECRM (314 aa)). The interval 167 to 185 (QQLDLNNCKNNLEPILEGY) is linker 1. The coil 1B stretch occupies residues 186-277 (ISNLRKQLET…CLYEAEIAQI (92 aa)). Residues 278-301 (QSHISDMSVILSMDNNRDLNLDSI) form a linker 12 region. The tract at residues 302–440 (IDEVRAQYEE…ATYRKLLESE (139 aa)) is coil 2. A tail region spans residues 441–524 (ECRMSGEFPS…QSASSKKASR (84 aa)). Residues 491–524 (VRGGEGRSRGSTSDYKDTLGKGSSQSASSKKASR) form a disordered region. The span at 494-509 (GEGRSRGSTSDYKDTL) shows a compositional bias: basic and acidic residues. Residues 510-524 (GKGSSQSASSKKASR) are compositionally biased toward low complexity.

Belongs to the intermediate filament family. In terms of assembly, heterodimer of a type I and a type II keratin. Associates with KRT16 and/or KRT17.

The protein localises to the cytoplasm. It is found in the cytoskeleton. In terms of biological role, plays a central role in hair formation. Essential component of keratin intermediate filaments in the inner root sheath (IRS) of the hair follicle. This chain is Keratin, type II cytoskeletal 71 (KRT71), found in Felis catus (Cat).